The sequence spans 821 residues: Ribonuclease R (821 aa).

The RNB domain occupies Arg-267–Ile-593. Residues Gly-652 to Val-733 form the S1 motif domain. Positions Leu-739–Lys-821 are disordered. Composition is skewed to basic and acidic residues over residues Lys-748–Ala-764 and Thr-774–Ser-794. The span at Lys-795–Gly-814 shows a compositional bias: basic residues.

It belongs to the RNR ribonuclease family. RNase R subfamily.

It is found in the cytoplasm. It carries out the reaction Exonucleolytic cleavage in the 3'- to 5'-direction to yield nucleoside 5'-phosphates.. Its function is as follows. 3'-5' exoribonuclease that releases 5'-nucleoside monophosphates and is involved in maturation of structured RNAs. In Vibrio cholerae serotype O1 (strain ATCC 39315 / El Tor Inaba N16961), this protein is Ribonuclease R.